The sequence spans 1605 residues: MADTCVQVALRIRPQGNREKLEGSRVCTSVLPNDPQVTIGGDRSFTYDHVFDMPTLQYVVYESCVEKLVDGLFDGYNATVLAYGQTGSGKTHTMGTAFDAAVTQKEEDLGVIPRAIQHTFRKIAECKAQAIEQGLLEPAFEVSVQFVELYNDDVLDLLSDDRSMSSSIRIHEDSRGEIVLHGVEQRSVFDMHGTMDILKNGALNRTVAATNMNEQSSRSHAIFTLHLKQQRVAANPLDESGEQKTGELEMEMLCAKFHFVDLAGSERMKRTGATGDRAKEGISINVGLLALGNVIAALGGANGKVSHVPYRDSKLTRLLQDSLGGNSRTLMIACCSPSDSDFVETLNTMKYANRAKEIKNKVVANQDKSSKMIGELRSRIAALEAELLEFKQGRRTVDVDGHEVVNDQYHENVYLTSEVNHLRFRVKALNETLDILRTENIDLKAKQEFNSIASLPTAGSGGAEGEVDAIQSTFRKYLEELERTKSLLYESQSTCDQLRKDNARWKALGASRGSGGGNAEFNSQKLIEMAKQEVEKQRKLMESVNIGGENVSSEYSSMAQDEDGTSNEAEELLDEEDLDEDEDETAEEKQEQEESEALQIDLSEVMIELDIKEKLIDQLERAERQNQQIRETYEKKLRELMERIKDTETERDRVLNEGGKRGGNNEQMKAIKQEYELKITDLRKELKKIEALDKEHLKVIAKSQRELQEKTRLKSEVVDLKKAKVELIKKMNEDKKKQKTQQLANARAFATKEKQTRLQANKIRTLEMKDKQREQFLKKTTQEVNALRKEKAVAAATARQANRGTPRGGAAVTNSPARRVRGVVGGVQAIKELAFSAKASKVKWDVIVRKIEESARRRQIVQKMEAELERYLNERHAVMVEIVENEKQFTQSQDVIYRDGLLEAIDSAKQKLQYVQDQITYQQKLICDVDEDITASNAENEPILDVGLKKQTIKQLFDGCDTLSEARYLLQHLFDLCIDKAALAAKVESEFKECAARIEQLEQQSSLKEQLLTSIIEDKNLVDEIEGFVPSDLRKSRTSSQSSLLRSGSPSVVEDAHTLQNYKVRRHTATQEELLFANSEENSMVSDANANPTVDVGADVGDSDERKEKKKRIAFVSTSPASTSFANSTSQSPSFSRNTRFRSTVGGVSNNNNIRKSVQPLINGKGVSSTARKGISRLPSVTEDPEIGIFAKSFPGRSRSNLMSSSSSTTTTTLSSSNLLNPRGTTSSSSSKSVFARISPSWLSDTCAELIMRNNNRKQSRIVPVKDGMRGNVITRTHTLEGHARGVLSVDVNEKLMVTGSKDRTAKLWDIEACREIRTLGIHPNNVHLVKFVPFSNYVFTFSMFEARAWDYRTPECICVKVLNSSGQVNEGDSIDVSQVMPRQNTIPFLETLITAADVDPTGQLLFTSFSAYVRVWNLREWKPLGRLNAASHSPKSEVSCLRTTMTPEGSILAYTGSRDHYVKEYEVGLGTGVIESKCEFTPPHYDNVTAVLPLNGHLYTASKDVNIMKFSLKDGKREHLELRAHQQYIQSLTGFGPKGKELLVSACKDGTIRFWDVGSSSRMKLVEEYSKAHQEGINDMCSTKSMLFTASGDSTVGFWKSNAV.

Residues 5 to 358 (CVQVALRIRP…MKYANRAKEI (354 aa)) enclose the Kinesin motor domain. Residue 84–91 (GQTGSGKT) coordinates ATP. Mg(2+) is bound by residues Thr-91 and Ser-217. Disordered regions lie at residues 548-596 (GENV…EESE), 1085-1152 (VSDA…SNNN), and 1198-1232 (SRSN…SSSK). Polar residues predominate over residues 550 to 559 (NVSSEYSSMA). Over residues 560-596 (QDEDGTSNEAEELLDEEDLDEDEDETAEEKQEQEESE) the composition is skewed to acidic residues. The stretch at 575-730 (EEDLDEDEDE…KKAKVELIKK (156 aa)) forms a coiled coil. Residues 1116-1152 (VSTSPASTSFANSTSQSPSFSRNTRFRSTVGGVSNNN) show a composition bias toward polar residues. Positions 1200–1232 (SNLMSSSSSTTTTTLSSSNLLNPRGTTSSSSSK) are enriched in low complexity. WD repeat units lie at residues 1282-1319 (GHAR…EIRT), 1389-1427 (FLET…PLGR), 1525-1566 (AHQQ…RMKL), and 1573-1605 (AHQE…SNAV).

This sequence belongs to the TRAFAC class myosin-kinesin ATPase superfamily. Kinesin family. In terms of assembly, component of a complex at least composed of alpha tubulin and beta tubulin. Within the complex, interacts with the alpha tubulin and beta tubulin dimer.

The protein localises to the cytoplasm. It is found in the cytoskeleton. Microtubule-binding motor protein which has ATPase activity. In complex with alpha and beta tubulins, preferentially binds to the growing microtubule plus-end to stabilize it and detaches following ATP hydrolysis. Negatively regulates axonal length through inhibiting microtubule polymerization at its plus-end. The sequence is that of Kinesin-like protein klp-12 from Caenorhabditis elegans.